The sequence spans 286 residues: Cbb3-type cytochrome c oxidase subunit CcoP (286 aa).

2 helical membrane passes run 11–31 and 62–82; these read FGLI…SSLI and VGWI…FFFG. Cytochrome c domains follow at residues 116–195 and 205–286; these read ELVD…MAEL and QLID…LSNR. Heme c-binding residues include cysteine 129, cysteine 132, histidine 133, methionine 174, cysteine 219, cysteine 222, histidine 223, and methionine 264.

Belongs to the CcoP / FixP family. In terms of assembly, component of the cbb3-type cytochrome c oxidase at least composed of CcoN, CcoO, CcoQ and CcoP. Heme c serves as cofactor.

It localises to the cell inner membrane. Its pathway is energy metabolism; oxidative phosphorylation. Functionally, C-type cytochrome. Part of the cbb3-type cytochrome c oxidase complex. CcoP subunit is required for transferring electrons from donor cytochrome c via its heme groups to CcoO subunit. From there, electrons are shuttled to the catalytic binuclear center of CcoN subunit where oxygen reduction takes place. The complex also functions as a proton pump. This is Cbb3-type cytochrome c oxidase subunit CcoP from Helicobacter pylori (strain ATCC 700392 / 26695) (Campylobacter pylori).